A 530-amino-acid polypeptide reads, in one-letter code: uncharacterized protein (530 aa).

5 consecutive transmembrane segments (helical) span residues 4 to 23, 28 to 47, 57 to 79, 91 to 113, and 148 to 170; these read FLAA…GLAI, LFGV…VVST, FVFQ…PAFF, LFMI…AFGL, and VIGY…AVGA. One can recognise an RCK C-terminal domain in the interval 260-344; that stretch reads LGGECDTKIE…MGEVRRFLGD (85 aa). 4 helical membrane-spanning segments follow: residues 352-374, 379-398, 419-441, and 451-473; these read VNLL…PVPL, TMYL…LGAL, LGLA…QALT, and VGFA…LLKL.

Belongs to the AAE transporter (TC 2.A.81) family.

It localises to the cell membrane. This is an uncharacterized protein from Corynebacterium efficiens (strain DSM 44549 / YS-314 / AJ 12310 / JCM 11189 / NBRC 100395).